The primary structure comprises 394 residues: Elongation factor Tu (394 aa).

The tr-type G domain maps to 10-204 (KPHINVGTIG…YLDTYIPEPK (195 aa)). A G1 region spans residues 19–26 (GHVDHGKT). 19–26 (GHVDHGKT) serves as a coordination point for GTP. A Mg(2+)-binding site is contributed by T26. Positions 60–64 (GITIN) are G2. The G3 stretch occupies residues 81–84 (DCPG). GTP-binding positions include 81-85 (DCPGH) and 136-139 (NKCD). The tract at residues 136–139 (NKCD) is G4. The segment at 174-176 (SAL) is G5.

The protein belongs to the TRAFAC class translation factor GTPase superfamily. Classic translation factor GTPase family. EF-Tu/EF-1A subfamily. Monomer.

Its subcellular location is the cytoplasm. It catalyses the reaction GTP + H2O = GDP + phosphate + H(+). Functionally, GTP hydrolase that promotes the GTP-dependent binding of aminoacyl-tRNA to the A-site of ribosomes during protein biosynthesis. This chain is Elongation factor Tu, found in Buchnera aphidicola subsp. Baizongia pistaciae (strain Bp).